The chain runs to 536 residues: CTP synthase (536 aa).

Residues methionine 1–leucine 267 are amidoligase domain. Serine 13 is a CTP binding site. Serine 13 is a binding site for UTP. ATP contacts are provided by residues serine 14–isoleucine 19 and aspartate 71. Aspartate 71 and glutamate 141 together coordinate Mg(2+). Residues aspartate 148–glutamate 150, lysine 188–glutamine 193, and lysine 224 contribute to the CTP site. UTP is bound by residues lysine 188–glutamine 193 and lysine 224. The Glutamine amidotransferase type-1 domain maps to lysine 292–glutamine 534. Glycine 354 contacts L-glutamine. The active-site Nucleophile; for glutamine hydrolysis is the cysteine 381. L-glutamine contacts are provided by residues leucine 382–glutamine 385, glutamate 405, and arginine 462. Active-site residues include histidine 507 and glutamate 509.

Belongs to the CTP synthase family. As to quaternary structure, homotetramer.

The catalysed reaction is UTP + L-glutamine + ATP + H2O = CTP + L-glutamate + ADP + phosphate + 2 H(+). It carries out the reaction L-glutamine + H2O = L-glutamate + NH4(+). It catalyses the reaction UTP + NH4(+) + ATP = CTP + ADP + phosphate + 2 H(+). The protein operates within pyrimidine metabolism; CTP biosynthesis via de novo pathway; CTP from UDP: step 2/2. With respect to regulation, allosterically activated by GTP, when glutamine is the substrate; GTP has no effect on the reaction when ammonia is the substrate. The allosteric effector GTP functions by stabilizing the protein conformation that binds the tetrahedral intermediate(s) formed during glutamine hydrolysis. Inhibited by the product CTP, via allosteric rather than competitive inhibition. Functionally, catalyzes the ATP-dependent amination of UTP to CTP with either L-glutamine or ammonia as the source of nitrogen. Regulates intracellular CTP levels through interactions with the four ribonucleotide triphosphates. This Prochlorococcus marinus (strain MIT 9215) protein is CTP synthase.